A 464-amino-acid chain; its full sequence is ATP-dependent protease ATPase subunit HslU (464 aa).

ATP is bound by residues V18, 60–65 (GVGKTE), D277, E342, and R414.

It belongs to the ClpX chaperone family. HslU subfamily. As to quaternary structure, a double ring-shaped homohexamer of HslV is capped on each side by a ring-shaped HslU homohexamer. The assembly of the HslU/HslV complex is dependent on binding of ATP.

Its subcellular location is the cytoplasm. In terms of biological role, ATPase subunit of a proteasome-like degradation complex; this subunit has chaperone activity. The binding of ATP and its subsequent hydrolysis by HslU are essential for unfolding of protein substrates subsequently hydrolyzed by HslV. HslU recognizes the N-terminal part of its protein substrates and unfolds these before they are guided to HslV for hydrolysis. The polypeptide is ATP-dependent protease ATPase subunit HslU (Lactobacillus delbrueckii subsp. bulgaricus (strain ATCC BAA-365 / Lb-18)).